A 402-amino-acid chain; its full sequence is D-mannonate dehydratase (402 aa).

Substrate is bound by residues Asn37 and His122. The Proton donor/acceptor role is filled by Tyr159. Position 210 (Asp210) interacts with Mg(2+). His212 serves as the catalytic Proton donor/acceptor. Mg(2+) is bound by residues Glu236 and Glu262. Residues Glu262, Arg283, His312, Asp316, and Glu339 each contribute to the substrate site.

This sequence belongs to the mandelate racemase/muconate lactonizing enzyme family. GalD subfamily. As to quaternary structure, homotetramer. Mg(2+) serves as cofactor.

The enzyme catalyses D-mannonate = 2-dehydro-3-deoxy-D-gluconate + H2O. It functions in the pathway carbohydrate metabolism; pentose and glucuronate interconversion. Functionally, catalyzes the dehydration of D-mannonate. Has no detectable activity with a panel of 70 other acid sugars (in vitro). The protein is D-mannonate dehydratase (manD) of Novosphingobium aromaticivorans (strain ATCC 700278 / DSM 12444 / CCUG 56034 / CIP 105152 / NBRC 16084 / F199).